The sequence spans 289 residues: DDRGK domain-containing protein 1 (289 aa).

Over 1 to 2 (MD) the chain is Lumenal. Residues 3–23 (PFILAAIISGIVIIILSIAFL) form a helical membrane-spanning segment. The Cytoplasmic segment spans residues 24–289 (RVSQVKPQAA…LINLAPVTVP (266 aa)). Residues 65-168 (RHQAALEEEP…DERKKREQEE (104 aa)) are disordered. Acidic residues predominate over residues 70–85 (LEEEPEIQEEADEGAP). Basic and acidic residues predominate over residues 87 to 166 (IDQKIDFDDK…AEDERKKREQ (80 aa)).

It belongs to the DDRGK1 family. Interacts with Atg9; the interaction is transient.

Its subcellular location is the endoplasmic reticulum membrane. Substrate adapter for ufmylation, the covalent attachment of the ubiquitin-like modifier UFM1 to substrate proteins. Required for ufmylation of Atg9; protects the nervous system during aging, possibly by stabilizing Atg9 and supporting its function. This is DDRGK domain-containing protein 1 from Bombyx mori (Silk moth).